The following is a 563-amino-acid chain: Inositol-3-phosphate synthase 1-A (563 aa).

It belongs to the myo-inositol 1-phosphate synthase family. Requires NAD(+) as cofactor.

The protein resides in the cytoplasm. The enzyme catalyses D-glucose 6-phosphate = 1D-myo-inositol 3-phosphate. Its pathway is polyol metabolism; myo-inositol biosynthesis; myo-inositol from D-glucose 6-phosphate: step 1/2. Functionally, key enzyme in myo-inositol biosynthesis pathway that catalyzes the conversion of glucose 6-phosphate to 1-myo-inositol 1-phosphate in a NAD-dependent manner. Rate-limiting enzyme in the synthesis of all inositol-containing compounds. The polypeptide is Inositol-3-phosphate synthase 1-A (isyna1-a) (Xenopus laevis (African clawed frog)).